Reading from the N-terminus, the 332-residue chain is D-lactate dehydrogenase (332 aa).

Residues 155 to 156 (RI), Asp175, 206 to 207 (VP), Asn212, and 233 to 235 (FAR) each bind NAD(+). Active-site residues include Arg235 and Glu264. His296 functions as the Proton donor in the catalytic mechanism.

The protein belongs to the D-isomer specific 2-hydroxyacid dehydrogenase family. Homodimer.

It carries out the reaction (R)-lactate + NAD(+) = pyruvate + NADH + H(+). This chain is D-lactate dehydrogenase, found in Lactiplantibacillus pentosus (Lactobacillus pentosus).